A 577-amino-acid chain; its full sequence is Myb-like protein N (577 aa).

Disordered regions lie at residues 1-23, 206-225, and 240-264; these read MMTINNNNLNNSNNINNNNNIYT, TPFSLQCPNSPNSTSSSPLN, and SSSSSASSSSTSSQPPSPQTLLSSS. The segment covering 213–225 has biased composition (low complexity); it reads PNSPNSTSSSPLN. HTH myb-type domains follow at residues 403-465 and 466-517; these read KKST…CPAI and RKGS…SREV. 2 DNA-binding regions (H-T-H motif) span residues 437 to 461 and 489 to 513; these read WKKIALQIGGGKTGAQCAQHWKRVL and WKNVASEIRTRTDIQCRYQYFKSCM. One can recognise a Myb-like domain in the interval 518–570; the sequence is PWTPKEDEILQKKVIENKQDSTKEIGWMDLSKAMARARQTKIPRTALECKIRF.

Its subcellular location is the nucleus. This Dictyostelium discoideum (Social amoeba) protein is Myb-like protein N (mybN).